The sequence spans 5202 residues: Usherin (5202 aa).

The signal sequence occupies residues 1 to 31 (MNCPVLSLGSGFLFQVIEMLIFAYFASISLT). The Extracellular portion of the chain corresponds to 32 to 5042 (ESRGLFPRLE…KSTEFYSELW (5011 aa)). Positions 271-517 (QDFRLYQVAL…AVDEITISGR (247 aa)) constitute a Laminin N-terminal domain. N-linked (GlcNAc...) asparagine glycosylation is found at N361 and N451. Intrachain disulfides connect C518–C527, C520–C536, C538–C549, C552–C572, C575–C584, C577–C605, C608–C617, C620–C638, C641–C655, C643–C662, C664–C673, C676–C691, C694–C708, C696–C715, C717–C726, C729–C744, C747–C759, C749–C766, C768–C777, C780–C792, C795–C808, C797–C815, C817–C826, C829–C844, C847–C861, C849–C868, C870–C879, C882–C897, C900–C913, C902–C920, C922–C931, C934–C948, C951–C963, C953–C970, C972–C982, C985–C999, C1002–C1014, C1004–C1021, C1023–C1032, and C1035–C1050. 10 Laminin EGF-like domains span residues 518 to 574 (CQCH…NCKP), 575 to 640 (CQCN…VCKP), 641 to 693 (CDCD…GCSP), 694 to 746 (CNCN…GCEP), 747 to 794 (CQCN…NCKA), 795 to 846 (CDCD…LCLP), 847 to 899 (CNCD…HCQM), 900 to 950 (CECD…GCLP), 951 to 1001 (CSCH…RCQP), and 1002 to 1052 (CNCH…GCSK). Residues N587 and N611 are each glycosylated (N-linked (GlcNAc...) asparagine). A glycan (N-linked (GlcNAc...) asparagine) is linked at N650. N697 is a glycosylation site (N-linked (GlcNAc...) asparagine). 3 N-linked (GlcNAc...) asparagine glycosylation sites follow: N839, N856, and N862. An N-linked (GlcNAc...) asparagine glycan is attached at N888. N-linked (GlcNAc...) asparagine glycosylation occurs at N944. An N-linked (GlcNAc...) asparagine glycan is attached at N1011. Fibronectin type-III domains lie at 1058–1146 (PPPR…TKPG), 1148–1244 (PEGN…APPQ), 1245–1363 (RLSP…SAPV), and 1364–1468 (FMIP…AAPA). N-linked (GlcNAc...) asparagine glycans are attached at residues N1071, N1151, and N1174. Residues N1379, N1388, N1479, and N1635 are each glycosylated (N-linked (GlcNAc...) asparagine). Laminin G-like domains are found at residues 1517-1709 (MKGI…WEGC) and 1714-1891 (NEGA…LDGC). An intrachain disulfide couples C1672 to C1709. The N-linked (GlcNAc...) asparagine glycan is linked to N1779. Residues C1862 and C1891 are joined by a disulfide bond. Fibronectin type-III domains lie at 1869–1955 (TRGA…AAPQ), 1957–2054 (VPTP…TPQE), 2055–2144 (APQE…LPPE), 2145–2239 (HVDS…TDED), 2243–2330 (GVPA…APPE), 2331–2433 (GTVN…MPPG), 2437–2531 (GVLP…TAED), 2535–2622 (PVVP…TLPG), 2624–2722 (PEGI…TRPS), 2726–2819 (GVQP…THPT), 2820–2923 (VPQN…TLAG), 2927–3018 (RGAN…TCDG), 3022–3112 (GMLP…TPSD), and 3113–3209 (IPTP…CCEE). N-linked (GlcNAc...) asparagine glycans are attached at residues N1903, N2011, N2014, N2048, N2130, N2182, N2195, N2258, N2285, N2322, N2377, N2382, N2407, and N2413. N-linked (GlcNAc...) asparagine glycans are attached at residues N2581, N2584, N2656, N2710, N2770, and N2788. N2930, N2937, N2970, N3032, and N3099 each carry an N-linked (GlcNAc...) asparagine glycan. 4 N-linked (GlcNAc...) asparagine glycosylation sites follow: N3217, N3330, N3419, and N3433. 2 disulfide bridges follow: C3371/C3444 and C3399/C3425. 16 consecutive Fibronectin type-III domains span residues 3403-3497 (CPAS…TKED), 3501-3589 (GVSP…TQGV), 3592-3682 (SILP…AAPE), 3684-3770 (VWVT…TPMS), 3774-3865 (EIYP…TPEA), 3866-3963 (APMD…TLEA), 3964-4067 (PPQD…SSPS), 4068-4153 (GLRN…TDEA), 4157-4261 (SQLA…TLQA), 4262-4357 (PPEG…AAPS), 4358-4445 (EVSP…ALPE), 4446-4530 (NMDS…TSPS), 4534-4630 (GMEP…TPEI), 4636-4733 (PPPH…TGPA), 4734-4827 (PPEG…THPA), and 4828-4927 (PPSG…SFTT). N-linked (GlcNAc...) asparagine glycans are attached at residues N3653, N3694, N3733, N3780, and N3849. N-linked (GlcNAc...) asparagine glycosylation is present at N3984. N-linked (GlcNAc...) asparagine glycosylation is found at N4202, N4226, N4317, and N4418. Positions 4518 to 4541 (ILSPLVKDRTSPSAPSGMEPPKLQ) are disordered. N-linked (GlcNAc...) asparagine glycans are attached at residues N4564, N4583, N4691, N4754, and N4800. 2 N-linked (GlcNAc...) asparagine glycosylation sites follow: N4943 and N4950. The chain crosses the membrane as a helical span at residues 5043 to 5063 (FIVLMAMLGLILLAIFLSLIL). Residues 5064-5202 (QRKIHKEPYI…ERTTFTDTHL (139 aa)) are Cytoplasmic-facing. The PDZ-binding motif lies at 5200 to 5202 (THL).

As to quaternary structure, interacts with collagen IV and fibronectin via its laminin EGF-like domains. Interaction with collagen may be required for stable integration into the basement membrane. Interacts with NINL. Interacts with USH1C. Component of USH2 complex, composed of ADGRV1, PDZD7, USH2A and WHRN. Interacts with ADGRV1/MASS1 (via N-terminal PDZ domain). Interacts (via the cytoplasmic region) with WHRN. Interacts (via the cytoplasmic region) with PDZD7. Interacts (via the cytoplasmic region) with VEZT and MYO7A (via MyTH4-FERM domains); the interaction associates VEZT with the USH2 complex at the stereocilia base. In terms of tissue distribution, present in the basement membrane of many, but not all tissues. Expressed in retina, cochlea, small and large intestine, pancreas, bladder, prostate, esophagus, trachea, thymus, salivary glands, placenta, ovary, fallopian tube, uterus and testis. Absent in many other tissues such as heart, lung, liver, kidney and brain. In the retina, it is present in the basement membranes in the Bruch's layer choroid capillary basement membranes, where it localizes just beneath the retinal pigment epithelial cells (at protein level). Weakly expressed. Isoform 2 is expressed in fetal eye, cochlea and heart, and at very low level in brain, CNS, intestine, skeleton, tongue, kidney and lung. Isoform 2 is not expressed in stomach and liver. In adult tissues, isoform 2 is expressed in neural retina and testis, and at low level in brain, heart, kidney and liver. Isoform 1 displays a similar pattern of expression but is expressed at very low level in fetal cochlea.

It is found in the cell projection. The protein localises to the stereocilium membrane. The protein resides in the secreted. Functionally, involved in hearing and vision as member of the USH2 complex. In the inner ear, required for the maintenance of the hair bundle ankle formation, which connects growing stereocilia in developing cochlear hair cells. In retina photoreceptors, the USH2 complex is required for the maintenance of periciliary membrane complex that seems to play a role in regulating intracellular protein transport. The sequence is that of Usherin (USH2A) from Homo sapiens (Human).